A 355-amino-acid polypeptide reads, in one-letter code: Anhydro-N-acetylmuramic acid kinase (355 aa).

9 to 16 (GTSLDGVD) provides a ligand contact to ATP.

It belongs to the anhydro-N-acetylmuramic acid kinase family.

It carries out the reaction 1,6-anhydro-N-acetyl-beta-muramate + ATP + H2O = N-acetyl-D-muramate 6-phosphate + ADP + H(+). It functions in the pathway amino-sugar metabolism; 1,6-anhydro-N-acetylmuramate degradation. It participates in cell wall biogenesis; peptidoglycan recycling. Its function is as follows. Catalyzes the specific phosphorylation of 1,6-anhydro-N-acetylmuramic acid (anhMurNAc) with the simultaneous cleavage of the 1,6-anhydro ring, generating MurNAc-6-P. Is required for the utilization of anhMurNAc either imported from the medium or derived from its own cell wall murein, and thus plays a role in cell wall recycling. This Paramagnetospirillum magneticum (strain ATCC 700264 / AMB-1) (Magnetospirillum magneticum) protein is Anhydro-N-acetylmuramic acid kinase.